The primary structure comprises 343 residues: Phosphate acyltransferase (343 aa).

It belongs to the PlsX family. As to quaternary structure, homodimer. Probably interacts with PlsY.

The protein resides in the cytoplasm. The catalysed reaction is a fatty acyl-[ACP] + phosphate = an acyl phosphate + holo-[ACP]. Its pathway is lipid metabolism; phospholipid metabolism. Its function is as follows. Catalyzes the reversible formation of acyl-phosphate (acyl-PO(4)) from acyl-[acyl-carrier-protein] (acyl-ACP). This enzyme utilizes acyl-ACP as fatty acyl donor, but not acyl-CoA. The polypeptide is Phosphate acyltransferase (Limosilactobacillus reuteri (strain DSM 20016) (Lactobacillus reuteri)).